A 442-amino-acid chain; its full sequence is Elongation factor 1-gamma (442 aa).

The GST N-terminal domain occupies 2-87 (AAGTLYTYPE…FLSNDALRGS (86 aa)). The 129-residue stretch at 88-216 (TPQASAQVLQ…VKLCEKMAQF (129 aa)) folds into the GST C-terminal domain. Composition is skewed to basic and acidic residues over residues 224–242 (MQPKKEAPAKKEKAGKEGG) and 249–263 (QEKKEKKKEEKKAAP). The disordered stretch occupies residues 224-273 (MQPKKEAPAKKEKAGKEGGKQQQPQQEKKEKKKEEKKAAPAEEEMDECEA). One can recognise an EF-1-gamma C-terminal domain in the interval 281–442 (AKDPYAHLPK…KSFNQGKIFK (162 aa)).

In terms of assembly, EF-1 is composed of four subunits: alpha, beta, delta, and gamma.

Functionally, probably plays a role in anchoring the complex to other cellular components. The chain is Elongation factor 1-gamma (eef1g) from Carassius auratus (Goldfish).